Consider the following 438-residue polypeptide: 3-phosphoshikimate 1-carboxyvinyltransferase (438 aa).

Residues Lys-26, Ser-27, and Arg-31 each contribute to the 3-phosphoshikimate site. Lys-26 contributes to the phosphoenolpyruvate binding site. Phosphoenolpyruvate is bound by residues Gly-99 and Arg-127. Residues Ser-170, Ser-171, Gln-172, Ser-199, Glu-314, and His-343 each contribute to the 3-phosphoshikimate site. Phosphoenolpyruvate is bound at residue Gln-172. The Proton acceptor role is filled by Glu-314. Phosphoenolpyruvate contacts are provided by Arg-347, Arg-388, and Lys-413.

This sequence belongs to the EPSP synthase family. In terms of assembly, monomer.

The protein resides in the cytoplasm. It carries out the reaction 3-phosphoshikimate + phosphoenolpyruvate = 5-O-(1-carboxyvinyl)-3-phosphoshikimate + phosphate. It participates in metabolic intermediate biosynthesis; chorismate biosynthesis; chorismate from D-erythrose 4-phosphate and phosphoenolpyruvate: step 6/7. In terms of biological role, catalyzes the transfer of the enolpyruvyl moiety of phosphoenolpyruvate (PEP) to the 5-hydroxyl of shikimate-3-phosphate (S3P) to produce enolpyruvyl shikimate-3-phosphate and inorganic phosphate. In Mycobacterium sp. (strain JLS), this protein is 3-phosphoshikimate 1-carboxyvinyltransferase.